Here is a 164-residue protein sequence, read N- to C-terminus: Peptidyl-prolyl cis-trans isomerase A (164 aa).

An N-acetylmethionine modification is found at Met-1. Val-2 is subject to N-acetylvaline; in Peptidyl-prolyl cis-trans isomerase A, N-terminally processed. A PPIase cyclophilin-type domain is found at 7-163 (FFDITADGEP…KKITISDCGQ (157 aa)). Lys-28 is subject to N6-acetyllysine; alternate. Residue Lys-28 forms a Glycyl lysine isopeptide (Lys-Gly) (interchain with G-Cter in SUMO2); alternate linkage. Lys-28 is covalently cross-linked (Glycyl lysine isopeptide (Lys-Gly) (interchain with G-Cter in ubiquitin); alternate). 2 positions are modified to N6-acetyllysine: Lys-44 and Lys-76. Ser-77 is subject to Phosphoserine. Residue Lys-82 is modified to N6-acetyllysine; alternate. Lys-82 participates in a covalent cross-link: Glycyl lysine isopeptide (Lys-Gly) (interchain with G-Cter in SUMO2); alternate. The residue at position 93 (Thr-93) is a Phosphothreonine. N-linked (GlcNAc...) asparagine glycosylation is present at Asn-108. 3 positions are modified to N6-acetyllysine: Lys-125, Lys-131, and Lys-133.

It belongs to the cyclophilin-type PPIase family. PPIase A subfamily. As to quaternary structure, interacts with protein phosphatase PPP3CA/calcineurin A. Interacts with isoform 2 of BSG/CD147. Interacts with FOXO1; the interaction promotes FOXO1 dephosphorylation, nuclear accumulation and transcriptional activity. Interacts with integrin ITGA2B:ITGB3; the interaction is ROS and peptidyl-prolyl cis-trans isomerase (PPIase) activity-dependent and is increased in the presence of thrombin. Interacts with MAP3K5. Interacts with TARDBP; the interaction is dependent on the RNA-binding activity of TARDBP and the PPIase activity of PPIA/CYPA and the acetylation of PPIA/CYPA at Lys-125 favors the interaction. Interacts with HNRNPA1, HNRNPA2B1, HNRNPC, RBMX, HNRNPK and HNRNPM. In terms of processing, acetylation at Lys-125 markedly inhibits catalysis of cis to trans isomerization. PPIA acetylation also antagonizes the immunosuppressive effects of cyclosporine by inhibiting the sequential steps of cyclosporine binding and calcineurin inhibition. Acetylation at Lys-125 favors the interaction with TARDBP.

Its subcellular location is the cytoplasm. It is found in the secreted. The protein localises to the nucleus. The catalysed reaction is [protein]-peptidylproline (omega=180) = [protein]-peptidylproline (omega=0). Its activity is regulated as follows. Binds cyclosporin A (CsA). CsA mediates some of its effects via an inhibitory action on PPIase. In terms of biological role, catalyzes the cis-trans isomerization of proline imidic peptide bonds in oligopeptides. Exerts a strong chemotactic effect on leukocytes partly through activation of one of its membrane receptors BSG/CD147, initiating a signaling cascade that culminates in MAPK/ERK activation. Activates endothelial cells (ECs) in a proinflammatory manner by stimulating activation of NF-kappa-B and ERK, JNK and p38 MAP-kinases and by inducing expression of adhesion molecules including SELE and VCAM1. Induces apoptosis in ECs by promoting the FOXO1-dependent expression of CCL2 and BCL2L11 which are involved in EC chemotaxis and apoptosis. In response to oxidative stress, initiates proapoptotic and antiapoptotic signaling in ECs via activation of NF-kappa-B and AKT1 and up-regulation of antiapoptotic protein BCL2. Negatively regulates MAP3K5/ASK1 kinase activity, autophosphorylation and oxidative stress-induced apoptosis mediated by MAP3K5/ASK1. Necessary for the assembly of TARDBP in heterogeneous nuclear ribonucleoprotein (hnRNP) complexes and regulates TARDBP binding to RNA UG repeats and TARDBP-dependent expression of HDAC6, ATG7 and VCP which are involved in clearance of protein aggregates. Plays an important role in platelet activation and aggregation. Regulates calcium mobilization and integrin ITGA2B:ITGB3 bidirectional signaling via increased ROS production as well as by facilitating the interaction between integrin and the cell cytoskeleton. Binds heparan sulfate glycosaminoglycans. This is Peptidyl-prolyl cis-trans isomerase A (Ppia) from Rattus norvegicus (Rat).